Reading from the N-terminus, the 160-residue chain is Putative pre-16S rRNA nuclease (160 aa).

The protein belongs to the YqgF nuclease family.

The protein resides in the cytoplasm. Its function is as follows. Could be a nuclease involved in processing of the 5'-end of pre-16S rRNA. This Chelativorans sp. (strain BNC1) protein is Putative pre-16S rRNA nuclease.